A 1372-amino-acid chain; its full sequence is Disease resistance protein RRS1B (1372 aa).

The 136-residue stretch at T2–L137 folds into the TIR domain. Residues V166–I417 enclose the NB-ARC domain. ATP is bound at residue G170 to T177. The stretch at P491–N515 is one LRR 1 repeat. The stretch at N528 to S544 is one LRR 2; degenerate repeat. LRR repeat units lie at residues L545 to P568, H570 to L591, A614 to L637, L638 to P658, P659 to P681, I693 to T718, P723 to E747, L749 to P767, R768 to F792, and C798 to L823. The short motif at I950–D964 is the Nuclear localization signal element. The segment at residues D1174 to P1240 is a DNA-binding region (WRKY). 2 disordered regions span residues L1246 to P1288 and Q1337 to R1372. A compositionally biased stretch (low complexity) spans S1249–S1269. Positions Q1270–H1279 are enriched in basic and acidic residues. Residues Q1337 to G1348 show a composition bias toward polar residues.

The protein belongs to the disease resistance TIR-NB-LRR family. In terms of assembly, interacts with RPS4B. RPS4B-RRS1B heterodimer interacts with the bacterial effectors AvrRps4 and PopP2.

It localises to the nucleus. Transcription factor. Interacts specifically with the W box (5'-(T)TGAC[CT]-3'), a frequently occurring elicitor-responsive cis-acting element. Also acts as a disease resistance protein that specifically recognizes the AvrRps4 type III effector avirulence protein from P.syringae. Heterodimerization with RPS4B is required to form a functional complex to recognize AvrRps4 and to mediate the hypersensitive response. This Arabidopsis thaliana (Mouse-ear cress) protein is Disease resistance protein RRS1B.